Consider the following 246-residue polypeptide: MNKKTKIEGLENFLTLNNIIFKDIKYYIQALTHKTYANEHANIESYDILEFIGDAILQMKSSIFIFQHFQNITEGEASLIRAKNVCSSGLSELSKKLGLSKLLLISKGSEHLRENVKINADLFESFVAAIYLDLGDEKLEEFLKEIFYPYISTTNLESIKDPKSSFQEYIQSYSNEIIEYKITQLENELRSELFKAELMHNGITYGVGFGKTKKVAEEEAATRALETLKAPSKQTIKKAIKAEKKE.

The RNase III domain maps to 10-135 (LENFLTLNNI…FVAAIYLDLG (126 aa)). Glutamate 50 is a binding site for Mg(2+). Aspartate 54 is an active-site residue. Mg(2+) is bound by residues aspartate 121 and glutamate 124. Glutamate 124 is a catalytic residue. The DRBM domain occupies 161–230 (DPKSSFQEYI…ATRALETLKA (70 aa)).

This sequence belongs to the ribonuclease III family. As to quaternary structure, homodimer. Requires Mg(2+) as cofactor.

It is found in the cytoplasm. The enzyme catalyses Endonucleolytic cleavage to 5'-phosphomonoester.. In terms of biological role, digests double-stranded RNA. Involved in the processing of primary rRNA transcript to yield the immediate precursors to the large and small rRNAs (23S and 16S). Processes some mRNAs, and tRNAs when they are encoded in the rRNA operon. Processes pre-crRNA and tracrRNA of type II CRISPR loci if present in the organism. The chain is Ribonuclease 3 from Mycoplasma mobile (strain ATCC 43663 / 163K / NCTC 11711) (Mesomycoplasma mobile).